A 244-amino-acid polypeptide reads, in one-letter code: Inactive chemokine-binding protein (244 aa).

Residues 1-79 (MHVPASLQQS…STSVEDVDPP (79 aa)) form a disordered region. The span at 37–53 (QDQTPTNDKICQSVTEI) shows a compositional bias: polar residues. Residues 54-77 (TESESDPDPEVESEDDSTSVEDVD) are compositionally biased toward acidic residues.

The protein belongs to the orthopoxvirus OPG001 family.

The protein localises to the host cytoplasm. The protein is truncated in this vaccinal strain and presumably inactive, because the lack of signal peptide prevents the protein of being secreted. In the other strains inhibits host immune defense by binding to host chemokines. Binds host CC chemokines (beta chemokines) such as RANTES with high affinity, but not CXC or C chemokines (alpha and gamma chemokines). This is Inactive chemokine-binding protein (OPG001) from Vaccinia virus (strain Copenhagen) (VACV).